The primary structure comprises 331 residues: MVRIAINGFGRIGRLVLRIALSRKNIEVVAINDPFITVDYAAYMFKYDSTHGRFDGEVSHDGKSLIIDGKKVLVFQERDPATLPWGAEKIDIAIDSTGIFKELDSAQKHIDAGAKKVVITAPSSTAPMFVVGVNEDKYAGQTIVSNASCTTNCLAPLAKIINNAFGIEEGLMTTVHSITATQKTVDGPSHKDWRGGRTASGNIIPSSTGAAKAVGKVLPELQGKLTGMAFRVPTVDVSVVDLTVKLAKPATYEEIKAVVKKASENELKGVMGYTEDAVVSSDFLGDTHSSIFDAAAGIQLSPQFVKLVSWYDNEFGYSTRVVDLVELVAKN.

Residues R11 to I12, D33, and R78 contribute to the NAD(+) site. D-glyceraldehyde 3-phosphate contacts are provided by residues S148–T150, T179, T208–G209, and R231. The active-site Nucleophile is the C149. Residue N313 participates in NAD(+) binding.

Belongs to the glyceraldehyde-3-phosphate dehydrogenase family. As to quaternary structure, homotetramer.

The protein resides in the cytoplasm. It catalyses the reaction D-glyceraldehyde 3-phosphate + phosphate + NAD(+) = (2R)-3-phospho-glyceroyl phosphate + NADH + H(+). The protein operates within carbohydrate degradation; glycolysis; pyruvate from D-glyceraldehyde 3-phosphate: step 1/5. This chain is Glyceraldehyde-3-phosphate dehydrogenase 2 (GAP2), found in Kluyveromyces marxianus (Yeast).